The chain runs to 176 residues: Isopentenyl-diphosphate Delta-isomerase (176 aa).

Mn(2+)-binding residues include His-23 and His-29. Residues 27 to 161 (LRHLAISVFV…PERFTPWLKI (135 aa)) form the Nudix hydrolase domain. Cys-63 is a catalytic residue. Position 63 (Cys-63) interacts with Mg(2+). His-65 lines the Mn(2+) pocket. Glu-83 contributes to the Mg(2+) binding site. 2 residues coordinate Mn(2+): Glu-109 and Glu-111. Residue Glu-111 is part of the active site.

Belongs to the IPP isomerase type 1 family. Requires Mg(2+) as cofactor. Mn(2+) serves as cofactor.

It is found in the cytoplasm. It carries out the reaction isopentenyl diphosphate = dimethylallyl diphosphate. Its pathway is isoprenoid biosynthesis; dimethylallyl diphosphate biosynthesis; dimethylallyl diphosphate from isopentenyl diphosphate: step 1/1. The protein operates within porphyrin-containing compound metabolism; chlorophyll biosynthesis. Its function is as follows. Catalyzes the 1,3-allylic rearrangement of the homoallylic substrate isopentenyl (IPP) to its highly electrophilic allylic isomer, dimethylallyl diphosphate (DMAPP). In Rhodobacter capsulatus (strain ATCC BAA-309 / NBRC 16581 / SB1003), this protein is Isopentenyl-diphosphate Delta-isomerase.